We begin with the raw amino-acid sequence, 254 residues long: Nickel import ATP-binding protein NikD (254 aa).

The ABC transporter domain occupies 2 to 241 (PQQIELRNIA…PKHAVTRSLV (240 aa)). ATP is bound at residue 36–43 (GGSGSGKS).

This sequence belongs to the ABC transporter superfamily. Nickel importer (TC 3.A.1.5.3) family. In terms of assembly, the complex is composed of two ATP-binding proteins (NikD and NikE), two transmembrane proteins (NikB and NikC) and a solute-binding protein (NikA).

The protein localises to the cell inner membrane. It carries out the reaction Ni(2+)(out) + ATP + H2O = Ni(2+)(in) + ADP + phosphate + H(+). Part of the ABC transporter complex NikABCDE involved in nickel import. Responsible for energy coupling to the transport system. The chain is Nickel import ATP-binding protein NikD from Escherichia coli O157:H7.